Here is a 724-residue protein sequence, read N- to C-terminus: uncharacterized protein (724 aa).

Disordered stretches follow at residues 1–23 (MEDR…IPDN), 166–477 (PDGY…PPRD), 496–517 (EAHD…AHGP), and 532–691 (DHPI…PALS). Polar residues-rich tracts occupy residues 227 to 245 (VSQS…TVNQ) and 270 to 296 (STTL…TSDA). Residues 304–322 (TRDHDRYGNGRGPDTDRLE) are compositionally biased toward basic and acidic residues. Polar residues predominate over residues 403 to 413 (PSSSHSETPNM). Composition is skewed to basic and acidic residues over residues 550–560 (RNHEFTEDKRL) and 637–657 (LRHD…DLAA). Over residues 682–691 (RLAAASPALS) the composition is skewed to low complexity.

This is an uncharacterized protein from Neurospora crassa (strain ATCC 24698 / 74-OR23-1A / CBS 708.71 / DSM 1257 / FGSC 987).